Here is an 817-residue protein sequence, read N- to C-terminus: DNA mismatch repair protein MutS (817 aa).

Glycine 604 to serine 611 is a binding site for ATP.

The protein belongs to the DNA mismatch repair MutS family.

Functionally, this protein is involved in the repair of mismatches in DNA. It is possible that it carries out the mismatch recognition step. This protein has a weak ATPase activity. This is DNA mismatch repair protein MutS from Petrotoga mobilis (strain DSM 10674 / SJ95).